The sequence spans 416 residues: Serine hydroxymethyltransferase (416 aa).

(6S)-5,6,7,8-tetrahydrofolate is bound by residues L120 and 124–126 (GHL). K230 carries the post-translational modification N6-(pyridoxal phosphate)lysine. A (6S)-5,6,7,8-tetrahydrofolate-binding site is contributed by E246.

It belongs to the SHMT family. Homodimer. Pyridoxal 5'-phosphate serves as cofactor.

Its subcellular location is the cytoplasm. It catalyses the reaction (6R)-5,10-methylene-5,6,7,8-tetrahydrofolate + glycine + H2O = (6S)-5,6,7,8-tetrahydrofolate + L-serine. It participates in one-carbon metabolism; tetrahydrofolate interconversion. Its pathway is amino-acid biosynthesis; glycine biosynthesis; glycine from L-serine: step 1/1. In terms of biological role, catalyzes the reversible interconversion of serine and glycine with tetrahydrofolate (THF) serving as the one-carbon carrier. This reaction serves as the major source of one-carbon groups required for the biosynthesis of purines, thymidylate, methionine, and other important biomolecules. Also exhibits THF-independent aldolase activity toward beta-hydroxyamino acids, producing glycine and aldehydes, via a retro-aldol mechanism. The polypeptide is Serine hydroxymethyltransferase (Onion yellows phytoplasma (strain OY-M)).